The sequence spans 877 residues: Alanine--tRNA ligase (877 aa).

Residues histidine 567, histidine 571, cysteine 669, and histidine 673 each contribute to the Zn(2+) site.

The protein belongs to the class-II aminoacyl-tRNA synthetase family. Requires Zn(2+) as cofactor.

Its subcellular location is the cytoplasm. The catalysed reaction is tRNA(Ala) + L-alanine + ATP = L-alanyl-tRNA(Ala) + AMP + diphosphate. Catalyzes the attachment of alanine to tRNA(Ala) in a two-step reaction: alanine is first activated by ATP to form Ala-AMP and then transferred to the acceptor end of tRNA(Ala). Also edits incorrectly charged Ser-tRNA(Ala) and Gly-tRNA(Ala) via its editing domain. This Lactobacillus delbrueckii subsp. bulgaricus (strain ATCC 11842 / DSM 20081 / BCRC 10696 / JCM 1002 / NBRC 13953 / NCIMB 11778 / NCTC 12712 / WDCM 00102 / Lb 14) protein is Alanine--tRNA ligase.